Here is a 72-residue protein sequence, read N- to C-terminus: Probable protein transport protein Sec61 subunit gamma (72 aa).

The Cytoplasmic portion of the chain corresponds to 1-40; it reads MSQKLQKPSFLSEYLRSIRLFSKKCVRPSGKELSMSIKRH. The helical transmembrane segment at 41–61 threads the bilayer; the sequence is AIGIGFLGILGYAIKLIHIPI. The Extracellular segment spans residues 62–72; it reads NNIIVSSPGKE.

This sequence belongs to the SecE/SEC61-gamma family. As to quaternary structure, heterotrimeric complex composed of SEC61-alpha, SEC61-beta and SEC61-gamma.

The protein localises to the endoplasmic reticulum membrane. Its function is as follows. Necessary for protein translocation in the endoplasmic reticulum. This is Probable protein transport protein Sec61 subunit gamma from Encephalitozoon cuniculi (strain GB-M1) (Microsporidian parasite).